A 387-amino-acid polypeptide reads, in one-letter code: Erythronate-4-phosphate dehydrogenase (387 aa).

Substrate contacts are provided by serine 45 and threonine 67. Aspartate 147 contributes to the NAD(+) binding site. Arginine 208 is an active-site residue. Aspartate 232 is a binding site for NAD(+). The active site involves glutamate 237. The active-site Proton donor is the histidine 254. NAD(+) is bound at residue glycine 257. Tyrosine 258 is a substrate binding site.

This sequence belongs to the D-isomer specific 2-hydroxyacid dehydrogenase family. PdxB subfamily. In terms of assembly, homodimer.

It localises to the cytoplasm. The enzyme catalyses 4-phospho-D-erythronate + NAD(+) = (R)-3-hydroxy-2-oxo-4-phosphooxybutanoate + NADH + H(+). The protein operates within cofactor biosynthesis; pyridoxine 5'-phosphate biosynthesis; pyridoxine 5'-phosphate from D-erythrose 4-phosphate: step 2/5. In terms of biological role, catalyzes the oxidation of erythronate-4-phosphate to 3-hydroxy-2-oxo-4-phosphonooxybutanoate. This is Erythronate-4-phosphate dehydrogenase from Shewanella woodyi (strain ATCC 51908 / MS32).